Here is a 106-residue protein sequence, read N- to C-terminus: Urease subunit beta (106 aa).

It belongs to the urease beta subunit family. In terms of assembly, heterotrimer of UreA (gamma), UreB (beta) and UreC (alpha) subunits. Three heterotrimers associate to form the active enzyme.

The protein resides in the cytoplasm. It carries out the reaction urea + 2 H2O + H(+) = hydrogencarbonate + 2 NH4(+). It functions in the pathway nitrogen metabolism; urea degradation; CO(2) and NH(3) from urea (urease route): step 1/1. In Prochlorococcus marinus subsp. pastoris (strain CCMP1986 / NIES-2087 / MED4), this protein is Urease subunit beta.